The primary structure comprises 274 residues: NH(3)-dependent NAD(+) synthetase (274 aa).

ATP is bound at residue 46–53 (GISGGQDS). Asp-52 serves as a coordination point for Mg(2+). Arg-140 serves as a coordination point for deamido-NAD(+). Thr-160 is a binding site for ATP. Glu-165 is a Mg(2+) binding site. Residues Lys-173 and Asp-180 each coordinate deamido-NAD(+). ATP contacts are provided by Lys-189 and Thr-211. 260-261 (HK) is a deamido-NAD(+) binding site.

This sequence belongs to the NAD synthetase family. As to quaternary structure, homodimer.

It catalyses the reaction deamido-NAD(+) + NH4(+) + ATP = AMP + diphosphate + NAD(+) + H(+). It functions in the pathway cofactor biosynthesis; NAD(+) biosynthesis; NAD(+) from deamido-NAD(+) (ammonia route): step 1/1. In terms of biological role, catalyzes the ATP-dependent amidation of deamido-NAD to form NAD. Uses ammonia as a nitrogen source. The chain is NH(3)-dependent NAD(+) synthetase from Streptococcus mutans serotype c (strain ATCC 700610 / UA159).